Reading from the N-terminus, the 500-residue chain is Na(+)/H(+) antiporter NhaB (500 aa).

The next 13 helical transmembrane spans lie at 11-31, 34-54, 58-78, 96-116, 129-149, 150-170, 205-225, 241-261, 311-331, 350-370, 394-414, 450-470, and 477-497; these read HGFL…FLVL, LLLV…EFIF, MALK…ALLL, VILL…LLLF, AILS…LDAL, TVTA…HRVA, LLMH…VGEP, FFFK…LTCV, ILII…LMVI, FQDA…VAVI, MLYL…VATI, ATPN…APLI, and MVWM…WAVT.

It belongs to the NhaB Na(+)/H(+) (TC 2.A.34) antiporter family.

The protein localises to the cell inner membrane. The catalysed reaction is 2 Na(+)(in) + 3 H(+)(out) = 2 Na(+)(out) + 3 H(+)(in). Na(+)/H(+) antiporter that extrudes sodium in exchange for external protons. The chain is Na(+)/H(+) antiporter NhaB from Pseudomonas putida (strain GB-1).